A 275-amino-acid chain; its full sequence is Large ribosomal subunit protein uL2 (275 aa).

The segment covering Ser-38–His-53 has biased composition (polar residues). Disordered regions lie at residues Ser-38–Lys-59 and Ala-224–Arg-257.

This sequence belongs to the universal ribosomal protein uL2 family. Part of the 50S ribosomal subunit. Forms a bridge to the 30S subunit in the 70S ribosome.

One of the primary rRNA binding proteins. Required for association of the 30S and 50S subunits to form the 70S ribosome, for tRNA binding and peptide bond formation. It has been suggested to have peptidyltransferase activity; this is somewhat controversial. Makes several contacts with the 16S rRNA in the 70S ribosome. This Burkholderia multivorans (strain ATCC 17616 / 249) protein is Large ribosomal subunit protein uL2.